A 919-amino-acid polypeptide reads, in one-letter code: Chitin synthase 1 (919 aa).

2 disordered regions span residues 1–69 and 109–134; these read MSYD…SFQT and NLAS…ALGP. Low complexity predominate over residues 11-30; the sequence is GQGRDYARQQRQQRSYQLSD. Asn187 and Asn556 each carry an N-linked (GlcNAc...) asparagine glycan. 7 helical membrane passes run 594-614, 630-650, 668-688, 713-733, 742-762, 843-863, and 887-919; these read IVLL…SIII, LVVF…FLVL, IASF…SLWL, VLIA…ILYA, FPQY…YAFC, LVAF…NVNG, and IILW…FRKT.

The protein belongs to the chitin synthase family. Class III subfamily.

Its subcellular location is the cell membrane. The protein localises to the cytoplasmic vesicle membrane. The catalysed reaction is [(1-&gt;4)-N-acetyl-beta-D-glucosaminyl](n) + UDP-N-acetyl-alpha-D-glucosamine = [(1-&gt;4)-N-acetyl-beta-D-glucosaminyl](n+1) + UDP + H(+). In terms of biological role, polymerizes chitin, a structural polymer of the cell wall and septum, by transferring the sugar moiety of UDP-GlcNAc to the non-reducing end of the growing chitin polymer. The protein is Chitin synthase 1 of Mycosarcoma maydis (Corn smut fungus).